The primary structure comprises 345 residues: Lysine-specific demethylase JMJ32 (345 aa).

One can recognise a JmjC domain in the interval 122–315 (GYLQQQNDCF…IKYAYFNFLQ (194 aa)). The Fe cation site is built by histidine 174, aspartate 176, and histidine 281.

It belongs to the JARID1 histone demethylase family. It depends on Fe(2+) as a cofactor. As to expression, expressed ubiquitously including in vasculatures, leaves, siliques, roots and inflorescences. Present in the root meristem. Accumulates in cotyledons and root tips of young seedlings.

The protein localises to the nucleus. The protein resides in the cytoplasm. Its subcellular location is the endoplasmic reticulum. It catalyses the reaction N(6),N(6),N(6)-trimethyl-L-lysyl(27)-[histone H3] + 2-oxoglutarate + O2 = N(6),N(6)-dimethyl-L-lysyl(27)-[histone H3] + formaldehyde + succinate + CO2. It carries out the reaction N(6),N(6)-dimethyl-L-lysyl(27)-[histone H3] + 2-oxoglutarate + O2 = N(6)-methyl-L-lysyl(27)-[histone H3] + formaldehyde + succinate + CO2. The catalysed reaction is N(6),N(6),N(6)-trimethyl-L-lysyl(27)-[histone H3] + 2 2-oxoglutarate + 2 O2 = N(6)-methyl-L-lysyl(27)-[histone H3] + 2 formaldehyde + 2 succinate + 2 CO2. Its function is as follows. Histone demethylase that demethylates 'Lys-27' (H3K27me) of histone H3 with a specific activity for H3K27me3 and H3K27me2, and involved in the regulation of gene expression. No activity on H3K27me1. Together with JMJ30, regulates the flowering-repressor FLOWERING LOCUS C (FLC) locus by removing the repressive histone modification H3 lysine 27 trimethylation (H3K27me3), especially at elevated temperatures (e.g. 29 degrees Celsius), thus preventing extreme precocious flowering. JMJ30 and JMJ32 are regulators involved in the integration of abscisic acid (ABA) and brassinosteroids (BR) signaling pathways. Together with JMJ30, controls ABA-mediated growth arrest during the post-germination stage in unfavorable conditions, and responses to ABA during root development, via the removal of repressive histone mark (H3K27me3) from the SnRK2.8 promoter, thus promoting SnRK2.8 expression and subsequent kinase-dependent ABI3 activation. In addition, removes the repressive histone marks (H3K27me3) from the BZR1 locus in response to stress and ABA, thus activating the BR signaling pathway which, in turn, inhibits the ABA signaling pathway. This is Lysine-specific demethylase JMJ32 from Arabidopsis thaliana (Mouse-ear cress).